A 248-amino-acid polypeptide reads, in one-letter code: 2,3-bisphosphoglycerate-dependent phosphoglycerate mutase (248 aa).

Substrate-binding positions include 10 to 17 (RHGQSQWN), 23 to 24 (TG), arginine 62, 89 to 92 (ERHY), lysine 100, 116 to 117 (RR), and 183 to 184 (GN). Catalysis depends on histidine 11, which acts as the Tele-phosphohistidine intermediate. The active-site Proton donor/acceptor is glutamate 89.

The protein belongs to the phosphoglycerate mutase family. BPG-dependent PGAM subfamily.

It carries out the reaction (2R)-2-phosphoglycerate = (2R)-3-phosphoglycerate. It participates in carbohydrate degradation; glycolysis; pyruvate from D-glyceraldehyde 3-phosphate: step 3/5. Catalyzes the interconversion of 2-phosphoglycerate and 3-phosphoglycerate. The polypeptide is 2,3-bisphosphoglycerate-dependent phosphoglycerate mutase (Corynebacterium kroppenstedtii (strain DSM 44385 / JCM 11950 / CIP 105744 / CCUG 35717)).